Here is a 69-residue protein sequence, read N- to C-terminus: Large ribosomal subunit protein bL32c (69 aa).

This sequence belongs to the bacterial ribosomal protein bL32 family.

The protein localises to the plastid. Its subcellular location is the chloroplast. The polypeptide is Large ribosomal subunit protein bL32c (Pelargonium hortorum (Common geranium)).